We begin with the raw amino-acid sequence, 573 residues long: Ribonuclease J (573 aa).

Positions 1–29 are disordered; sequence MENQERKPRRRRRRRPQEGSQGGPQDHVE. Positions 93, 95, 97, 98, 168, and 190 each coordinate Zn(2+). Substrate contacts are provided by residues 259 to 261 and 390 to 394; these read ASH and HASGH. Position 416 (His416) interacts with Zn(2+).

This sequence belongs to the metallo-beta-lactamase superfamily. RNA-metabolizing metallo-beta-lactamase-like family. Bacterial RNase J subfamily. In terms of assembly, homodimer. May be a subunit of the RNA degradosome. It depends on Zn(2+) as a cofactor.

Its subcellular location is the cytoplasm. An RNase that has endonuclease and possibly 5'-3' exonuclease activity. Probably involved in maturation of rRNA and in some organisms also mRNA maturation and/or decay. The polypeptide is Ribonuclease J (Thermus thermophilus (strain ATCC BAA-163 / DSM 7039 / HB27)).